The following is a 26-amino-acid chain: Acetylcholine receptor subunit delta (26 aa).

Belongs to the ligand-gated ion channel (TC 1.A.9) family. Acetylcholine receptor (TC 1.A.9.1) subfamily. Pentamer of two alpha chains, and one each of the beta, delta, and gamma chains.

Its subcellular location is the postsynaptic cell membrane. It localises to the cell membrane. It carries out the reaction K(+)(in) = K(+)(out). It catalyses the reaction Na(+)(in) = Na(+)(out). After binding acetylcholine, the AChR responds by an extensive change in conformation that affects all subunits and leads to opening of an ion-conducting channel across the plasma membrane. The polypeptide is Acetylcholine receptor subunit delta (chrnd) (Electrophorus electricus (Electric eel)).